Here is a 210-residue protein sequence, read N- to C-terminus: Thymidylate kinase (210 aa).

An ATP-binding site is contributed by 16 to 23 (GGDGVGKS).

It belongs to the thymidylate kinase family.

It catalyses the reaction dTMP + ATP = dTDP + ADP. Its function is as follows. Phosphorylation of dTMP to form dTDP in both de novo and salvage pathways of dTTP synthesis. The sequence is that of Thymidylate kinase from Leifsonia xyli subsp. xyli (strain CTCB07).